Here is a 629-residue protein sequence, read N- to C-terminus: Plastin-1 (629 aa).

M1 is subject to N-acetylmethionine. EF-hand domains are found at residues 11 to 46 (EELEELQEAFNKIDIDNSGYVSDYELQDLFKEASLP) and 51 to 86 (KVREIVEKILSVADSNKDGKISFEEFVSLMQELKSK). Positions 24, 26, 28, 30, 35, 64, 66, 68, 70, and 75 each coordinate Ca(2+). 2 actin-binding regions span residues 108–380 (TSTI…CLHK) and 381–625 (PNNN…GKGL). Calponin-homology (CH) domains lie at 122-238 (EEEK…KVGL), 266-376 (LSPE…NTYP), 395-504 (SKEE…RRYT), and 516-625 (KVND…GKGL).

Monomer. Post-translationally, phosphorylated. In small intestine, colon, and kidney; relatively lower levels of expression are detected in the lung and stomach.

It localises to the cytoplasm. The protein localises to the cell projection. The protein resides in the stereocilium. Actin-bundling protein. In the inner ear, it is required for stereocilia formation. Mediates liquid packing of actin filaments that is necessary for stereocilia to grow to their proper dimensions. In Homo sapiens (Human), this protein is Plastin-1 (PLS1).